An 86-amino-acid chain; its full sequence is Large ribosomal subunit protein uL23c (86 aa).

It belongs to the universal ribosomal protein uL23 family. As to quaternary structure, part of the 50S ribosomal subunit.

The protein resides in the plastid. Its subcellular location is the chloroplast. Functionally, binds to 23S rRNA. This chain is Large ribosomal subunit protein uL23c (rpl23), found in Chlorella vulgaris (Green alga).